The chain runs to 276 residues: Digeranylgeranylglyceryl phosphate synthase (276 aa).

Helical transmembrane passes span 12–34 (PHNC…GSVP), 38–60 (ILIL…NDYF), 84–104 (ALWY…LISL), 107–127 (FAFA…LKPL), 146–166 (GAIA…AFLV), 202–222 (VAAF…KAGV), 224–244 (VGYY…YLIL), and 256–276 (QLLL…AALM).

Belongs to the UbiA prenyltransferase family. DGGGP synthase subfamily. Mg(2+) serves as cofactor.

The protein resides in the cell membrane. It catalyses the reaction sn-3-O-(geranylgeranyl)glycerol 1-phosphate + (2E,6E,10E)-geranylgeranyl diphosphate = 2,3-bis-O-(geranylgeranyl)-sn-glycerol 1-phosphate + diphosphate. The protein operates within membrane lipid metabolism; glycerophospholipid metabolism. In terms of biological role, prenyltransferase that catalyzes the transfer of the geranylgeranyl moiety of geranylgeranyl diphosphate (GGPP) to the C2 hydroxyl of (S)-3-O-geranylgeranylglyceryl phosphate (GGGP). This reaction is the second ether-bond-formation step in the biosynthesis of archaeal membrane lipids. The sequence is that of Digeranylgeranylglyceryl phosphate synthase from Thermococcus gammatolerans (strain DSM 15229 / JCM 11827 / EJ3).